The chain runs to 118 residues: REPTOR-binding partner (118 aa).

Polar residues predominate over residues Met1–Gln20. Positions Met1–Ser53 are disordered. Over residues Thr36 to Ser53 the composition is skewed to basic and acidic residues. The segment at Lys40–Lys77 is basic motif. In terms of domain architecture, bZIP spans Lys40–Ile90. Residues Leu82–Leu89 form a leucine-zipper region.

It belongs to the bZIP family. ATF subfamily. Homodimer. Interacts (via C-terminus) with REPTOR (via C-terminus).

It localises to the nucleus. The protein resides in the chromosome. Its function is as follows. Transcriptional regulator that acts in the TORC1 signaling pathway to regulate energy homeostasis and promote survival during nutrient deprivation. Interacts with REPTOR to form a transcriptional activator complex that functions downstream of TORC1 to up-regulate the expression of most target genes induced by TORC1 inhibition. In the complex, acts to enhance the binding of the transcriptional activator REPTOR to the regulatory sequences of target genes. Under normal conditions TORC1 is active, inhibiting the formation of the REPTOR/REPTOR-BP complex by phosphorylating REPTOR and mediates its cytoplasmic retention by forming a docking site for 14-3-3 proteins. Upon TORC1 inhibition resulting from nutrient stress, REPTOR is recruited into the nucleus where it interacts with REPTOR-BP and together they maintain organismal metabolism by activating the expression of target stress response genes including those involved in glycogenesis and triglyceride biosynthesis. The complex also appears to negatively regulate some aspects of TORC1-dependent larval growth. The polypeptide is REPTOR-binding partner (Drosophila melanogaster (Fruit fly)).